A 412-amino-acid chain; its full sequence is Glutamate-1-semialdehyde 2,1-aminomutase (412 aa).

Lysine 260 is subject to N6-(pyridoxal phosphate)lysine.

Belongs to the class-III pyridoxal-phosphate-dependent aminotransferase family. HemL subfamily. Requires pyridoxal 5'-phosphate as cofactor.

The protein localises to the cytoplasm. The enzyme catalyses (S)-4-amino-5-oxopentanoate = 5-aminolevulinate. The protein operates within porphyrin-containing compound metabolism; protoporphyrin-IX biosynthesis; 5-aminolevulinate from L-glutamyl-tRNA(Glu): step 2/2. This is Glutamate-1-semialdehyde 2,1-aminomutase from Methanocorpusculum labreanum (strain ATCC 43576 / DSM 4855 / Z).